The primary structure comprises 494 residues: Argininosuccinate lyase (494 aa).

The protein belongs to the lyase 1 family. Argininosuccinate lyase subfamily.

It localises to the cytoplasm. The enzyme catalyses 2-(N(omega)-L-arginino)succinate = fumarate + L-arginine. It participates in amino-acid biosynthesis; L-arginine biosynthesis; L-arginine from L-ornithine and carbamoyl phosphate: step 3/3. The protein is Argininosuccinate lyase of Methanosphaerula palustris (strain ATCC BAA-1556 / DSM 19958 / E1-9c).